Consider the following 311-residue polypeptide: Malate dehydrogenase (311 aa).

NAD(+) contacts are provided by residues 7-13 and Asp34; that span reads GAAGGIG. Substrate is bound by residues Arg81 and Arg87. NAD(+)-binding positions include Asn94 and 117 to 119; that span reads ITN. The substrate site is built by Asn119 and Arg153. Catalysis depends on His177, which acts as the Proton acceptor. Residue Met227 participates in NAD(+) binding.

Belongs to the LDH/MDH superfamily. MDH type 1 family. In terms of assembly, homodimer.

The enzyme catalyses (S)-malate + NAD(+) = oxaloacetate + NADH + H(+). In terms of biological role, catalyzes the reversible oxidation of malate to oxaloacetate. This chain is Malate dehydrogenase, found in Shewanella loihica (strain ATCC BAA-1088 / PV-4).